The chain runs to 195 residues: Rac-like GTP-binding protein ARAC4 (195 aa).

GTP is bound by residues 12-19 (GDGAVGKT), 30-37 (FPTDYVPT), 59-63 (DTAGQ), and 117-120 (TKLD). Positions 34-42 (YVPTVFDNF) match the Effector region motif. Residue Cys-192 is modified to Cysteine methyl ester. Cys-192 carries S-geranylgeranyl cysteine lipidation. The propeptide at 193-195 (AFL) is removed in mature form.

Belongs to the small GTPase superfamily. Rho family. Interacts with SPK1, ICR1, ICR5 and PIR. As to expression, ubiquitous.

It localises to the cytoplasm. The protein resides in the cell membrane. In terms of biological role, inactive GDP-bound Rho GTPases reside in the cytosol, are found in a complex with Rho GDP-dissociation inhibitors (Rho GDIs), and are released from the GDI protein in order to translocate to membranes upon activation. Involved in cell polarity control during the actin-dependent tip growth of root hairs, thus regulating root hair length and root hair initiation. Contributes, in a SPK1-dependent manner, to the prevention of cortical microtubules organization into parallel arrays oriented perpendicular to the axis of cell elongation to limit anisotropic cell growth during petal development. May regulate a WAVE complex that activates the Arp2/3 complex. The chain is Rac-like GTP-binding protein ARAC4 from Arabidopsis thaliana (Mouse-ear cress).